Reading from the N-terminus, the 55-residue chain is MARQTDVRPIVRLRSTAGTGYTYVTRKNRRNDPDRLVLRKYDPIVRQHVEFREAR.

Belongs to the bacterial ribosomal protein bL33 family.

The polypeptide is Large ribosomal subunit protein bL33A (Salinispora tropica (strain ATCC BAA-916 / DSM 44818 / JCM 13857 / NBRC 105044 / CNB-440)).